A 407-amino-acid polypeptide reads, in one-letter code: Argininosuccinate synthase (407 aa).

Residues 12-20 and Ala-39 contribute to the ATP site; that span reads AYSGGLDTS. Tyr-92 and Ser-97 together coordinate L-citrulline. ATP is bound at residue Gly-122. L-aspartate contacts are provided by Thr-124, Asn-128, and Asp-129. Asn-128 contributes to the L-citrulline binding site. L-citrulline contacts are provided by Arg-132, Ser-182, Ser-191, Glu-267, and Tyr-279.

Belongs to the argininosuccinate synthase family. Type 1 subfamily. As to quaternary structure, homotetramer.

The protein resides in the cytoplasm. It catalyses the reaction L-citrulline + L-aspartate + ATP = 2-(N(omega)-L-arginino)succinate + AMP + diphosphate + H(+). The protein operates within amino-acid biosynthesis; L-arginine biosynthesis; L-arginine from L-ornithine and carbamoyl phosphate: step 2/3. The sequence is that of Argininosuccinate synthase from Campylobacter fetus subsp. fetus (strain 82-40).